We begin with the raw amino-acid sequence, 205 residues long: Large ribosomal subunit protein uL4 (205 aa).

Residues 54 to 78 (GDISGTTAKPHRQKHTGRARQGSLR) are disordered. Residues 62–71 (KPHRQKHTGR) are compositionally biased toward basic residues.

This sequence belongs to the universal ribosomal protein uL4 family. As to quaternary structure, part of the 50S ribosomal subunit.

In terms of biological role, one of the primary rRNA binding proteins, this protein initially binds near the 5'-end of the 23S rRNA. It is important during the early stages of 50S assembly. It makes multiple contacts with different domains of the 23S rRNA in the assembled 50S subunit and ribosome. Its function is as follows. Forms part of the polypeptide exit tunnel. This is Large ribosomal subunit protein uL4 from Ehrlichia chaffeensis (strain ATCC CRL-10679 / Arkansas).